The primary structure comprises 500 residues: Prostacyclin synthase (500 aa).

A helical membrane pass occupies residues 1-20 (MSWAVVFGLLAALLLLLLLT). Substrate contacts are provided by residues Arg106, Leu112, Asn287, 358-359 (TR), and Arg382. Position 441 (Cys441) interacts with heme.

This sequence belongs to the cytochrome P450 family. Requires heme as cofactor.

The protein localises to the endoplasmic reticulum membrane. The enzyme catalyses prostaglandin H2 = prostaglandin I2. It carries out the reaction a hydroperoxyeicosatetraenoate = an oxoeicosatetraenoate + H2O. It catalyses the reaction (15S)-hydroperoxy-(5Z,8Z,11Z,13E)-eicosatetraenoate = 15-oxo-(5Z,8Z,11Z,13E)-eicosatetraenoate + H2O. The catalysed reaction is (15S)-hydroperoxy-(5Z,8Z,11Z,13E)-eicosatetraenoate + AH2 = (15S)-hydroxy-(5Z,8Z,11Z,13E)-eicosatetraenoate + A + H2O. Catalyzes the biosynthesis and metabolism of eicosanoids. Catalyzes the isomerization of prostaglandin H2 to prostacyclin (= prostaglandin I2), a potent mediator of vasodilation and inhibitor of platelet aggregation. Additionally, displays dehydratase activity, toward hydroperoxyeicosatetraenoates (HPETEs), especially toward (15S)-hydroperoxy-(5Z,8Z,11Z,13E)-eicosatetraenoate (15(S)-HPETE). This Bos taurus (Bovine) protein is Prostacyclin synthase (PTGIS).